Here is a 190-residue protein sequence, read N- to C-terminus: MSKPTREEATEAVRTLLKFIGEDPTREGLLKTPDRVINSYTEIFSGYGKDVEEILNTKFYDTCNFQDFISLEGIKFTSFCEHHMLPFNGTVHIAYIPDNCIVGISKLARIVNIFAKRLQIQEKMTVQIAESVQENLKPLGVAVKIAALHSCMSMRGVMQDHSIMNTMHYTGIFAEQQKYRHEFLNLTTKR.

The Zn(2+) site is built by Cys-80, His-83, and Cys-151.

This sequence belongs to the GTP cyclohydrolase I family. In terms of assembly, toroid-shaped homodecamer, composed of two pentamers of five dimers.

The catalysed reaction is GTP + H2O = 7,8-dihydroneopterin 3'-triphosphate + formate + H(+). It participates in cofactor biosynthesis; 7,8-dihydroneopterin triphosphate biosynthesis; 7,8-dihydroneopterin triphosphate from GTP: step 1/1. This chain is GTP cyclohydrolase 1, found in Rickettsia akari (strain Hartford).